The primary structure comprises 388 residues: MNLHEYQAKQLFARYGLPAPTGYACTTPREAEEAASKIGAGPWVVKCQVHAGGRGKAGGVKVVNSKEDIRAFAENWLGKRLVTYQTDASGQPVNQILVEAATDIDKELYLGAVVDRGTRRVVFMASTEGGVEIEKVAEETPHLIHKMALDPLTGPQPYQGRELAFKLGLTGKQVGQFTKIFMGLATLFLERDLALVEINPLVVTKQGDLVCLDGKLTADGNALFRQSDLREMRDPSQEDSREAHAAQWELNYVALEGNIGCMVNGAGLAMGTMDIVKLSGGQPANFLDVGGGATKERVTEAFKIILSDDAVKAVFVNIFGGIVRCDLIADGIIGAVAEVGVNVPVVVRLEGNNAELGARKLADSGLNIIAATSLSDAAQRVVAAAEGK.

In terms of domain architecture, ATP-grasp spans 9–244 (KQLFARYGLP…PSQEDSREAH (236 aa)). ATP is bound by residues K46, 53 to 55 (GRG), E99, T102, and E107. The Mg(2+) site is built by N199 and D213. Residues N264 and 321–323 (GIV) contribute to the substrate site.

The protein belongs to the succinate/malate CoA ligase beta subunit family. In terms of assembly, heterotetramer of two alpha and two beta subunits. It depends on Mg(2+) as a cofactor.

It carries out the reaction succinate + ATP + CoA = succinyl-CoA + ADP + phosphate. It catalyses the reaction GTP + succinate + CoA = succinyl-CoA + GDP + phosphate. The protein operates within carbohydrate metabolism; tricarboxylic acid cycle; succinate from succinyl-CoA (ligase route): step 1/1. Functionally, succinyl-CoA synthetase functions in the citric acid cycle (TCA), coupling the hydrolysis of succinyl-CoA to the synthesis of either ATP or GTP and thus represents the only step of substrate-level phosphorylation in the TCA. The beta subunit provides nucleotide specificity of the enzyme and binds the substrate succinate, while the binding sites for coenzyme A and phosphate are found in the alpha subunit. The protein is Succinate--CoA ligase [ADP-forming] subunit beta of Erwinia tasmaniensis (strain DSM 17950 / CFBP 7177 / CIP 109463 / NCPPB 4357 / Et1/99).